The chain runs to 23 residues: U3-ctenitoxin-Co1a (23 aa).

2 disulfide bridges follow: cysteine 2–cysteine 17 and cysteine 9–cysteine 22.

As to expression, expressed by the venom gland.

It localises to the secreted. Antagonist of L-type calcium channels (Cav1/CACNA1). This Ctenus ornatus (Brazilian spider) protein is U3-ctenitoxin-Co1a.